The following is a 1442-amino-acid chain: Death-associated protein kinase 1 (1442 aa).

In terms of domain architecture, Protein kinase spans Tyr-13–Ile-275. ATP-binding positions include Leu-19–Val-27 and Lys-42. Asp-139 serves as the catalytic Proton acceptor. The segment at Gln-267–Asp-334 is calmodulin-binding. Ser-289 is subject to Phosphoserine; by RPS6KA1 and RPS6KA3. An autoinhibitory domain region spans residues Asn-292–Ala-301. Ser-308 is modified (phosphoserine; by autocatalysis). 2 positions are modified to phosphoserine: Ser-319 and Ser-333. ANK repeat units follow at residues His-378–Val-407, Gly-411–Val-440, Ser-444–Phe-473, Glu-477–Ile-506, Glu-510–Ala-539, Asp-543–Phe-572, His-576–Ile-605, and Tyr-609–Ala-638. In terms of domain architecture, Roc spans Thr-681–Ile-955. Ser-734 is subject to Phosphoserine; by MAPK1. Residues Lys-875 to Tyr-904 form an ANK 9 repeat. Residue Ser-1115 is modified to Phosphoserine. One copy of the ANK 10 repeat lies at Asp-1164–Val-1196. One can recognise a Death domain in the interval Lys-1312–Ser-1396. Position 1433 is a phosphoserine (Ser-1433).

The protein belongs to the protein kinase superfamily. CAMK Ser/Thr protein kinase family. DAP kinase subfamily. In terms of assembly, interacts with KLHL20. Interacts (via death domain) with MAPK1 and MAPK3. Interacts with MAP1B (via N-terminus). Interacts with PRKD1 in an oxidative stress-regulated manner. Interacts with PIN1, PDCD6, BECN1, TSC2 and STX1A. Interacts (via kinase domain) with DAPK3 (via kinase domain). Interacts with GRINB. Interacts (via death domain) with UNC5B (via death domain). Interacts with UNC5C (via death domain). The cofactor is Mg(2+). In terms of processing, ubiquitinated by the BCR(KLHL20) E3 ubiquitin ligase complex, leading to its degradation by the proteasome. In response to mitogenic stimulation (PMA or EGF), phosphorylated at Ser-289; phosphorylation suppresses DAPK1 pro-apoptotic function. Autophosphorylation at Ser-308 inhibits its catalytic activity. Phosphorylation at Ser-734 by MAPK1 increases its catalytic activity and promotes cytoplasmic retention of MAPK1. Endoplasmic-stress can cause dephosphorylation at Ser-308. High levels in bladder, uterus, vas deferens, lung, liver and kidney.

The enzyme catalyses L-seryl-[protein] + ATP = O-phospho-L-seryl-[protein] + ADP + H(+). The catalysed reaction is L-threonyl-[protein] + ATP = O-phospho-L-threonyl-[protein] + ADP + H(+). Activated by Ca(2+)/calmodulin. Regulated by a locking mechanism, involving autophosphorylation at Ser-308 and calmodulin binding. In the inactive state, Ser-308 is phosphorylated. Activation involves its dephosphorylation and a release-of-autoinhibition mechanism where binding of calmodulin induces a conformational change that relieves the steric block of the active site by the autoinhibitory domain. Activity is modulated by UNC5B and NTN1. UNC5B activates it by inhibiting the phosphorylation at Ser-308, whereas NTN1 inhibits UNC5B-mediated activation of DAPK1. Endoplasmic-stress activates by causing Ser-308 dephosphorylation. In terms of biological role, calcium/calmodulin-dependent serine/threonine kinase involved in multiple cellular signaling pathways that trigger cell survival, apoptosis, and autophagy. Regulates both type I apoptotic and type II autophagic cell deaths signal, depending on the cellular setting. The former is caspase-dependent, while the latter is caspase-independent and is characterized by the accumulation of autophagic vesicles. Phosphorylates PIN1 resulting in inhibition of its catalytic activity, nuclear localization, and cellular function. Phosphorylates TPM1, enhancing stress fiber formation in endothelial cells. Phosphorylates STX1A and significantly decreases its binding to STXBP1. Phosphorylates PRKD1 and regulates JNK signaling by binding and activating PRKD1 under oxidative stress. Phosphorylates BECN1, reducing its interaction with BCL2 and BCL2L1 and promoting the induction of autophagy. Phosphorylates TSC2, disrupting the TSC1-TSC2 complex and stimulating mTORC1 activity in a growth factor-dependent pathway. Phosphorylates RPS6, MYL9 and DAPK3. Acts as a signaling amplifier of NMDA receptors at extrasynaptic sites for mediating brain damage in stroke. Cerebral ischemia recruits DAPK1 into the NMDA receptor complex and it phosphorylates GRINB at Ser-1303 inducing injurious Ca(2+) influx through NMDA receptor channels, resulting in an irreversible neuronal death. Required together with DAPK3 for phosphorylation of RPL13A upon interferon-gamma activation which is causing RPL13A involvement in transcript-selective translation inhibition. This is Death-associated protein kinase 1 (Dapk1) from Mus musculus (Mouse).